The sequence spans 33 residues: Ice-structuring protein SS-3 (33 aa).

This sequence belongs to the type-I AFP family.

Antifreeze proteins lower the blood freezing point. In Myoxocephalus scorpius (Shorthorn sculpin), this protein is Ice-structuring protein SS-3.